The following is a 155-amino-acid chain: Ribonuclease 8 (155 aa).

Residues 1 to 28 form the signal peptide; sequence MAPARAGCCPLLLLLLLGLWVAEIPVSA. 3 cysteine pairs are disulfide-bonded: C65/C119, C83/C134, and C90/C97. Residues 66 to 70 and K91 each bind substrate; that span reads KDLNT. The active-site Proton donor is the H150.

The protein belongs to the pancreatic ribonuclease family.

The protein localises to the secreted. Functionally, has a low ribonuclease activity. This Saguinus oedipus (Cotton-top tamarin) protein is Ribonuclease 8 (RNASE8).